We begin with the raw amino-acid sequence, 1207 residues long: Systemin receptor SR160 (1207 aa).

An N-terminal signal peptide occupies residues 1-34 (MKAHKTVFNQHPLSLNKLFFVLLLIFFLPPASPA). The Cys pair 1 signature appears at 71-78 (CSFTGVSC). 20 LRR repeats span residues 109-131 (NLES…AKSQ), 135-157 (TLDS…SSFG), 161-181 (NLKS…EMLK), 186-207 (SLQV…PWVS), 213-234 (ELEF…LDFK), 235-257 (NLSY…KDCS), 258-280 (NLQH…LSSC), 282-304 (KLSF…PSES), 305-325 (LQYL…QLAD), 329-350 (TVVE…SLGE), 353-375 (SLEL…TLLK), 378-401 (NIKT…SNLP), 402-423 (KLET…GICK), 428-450 (NLKV…LSNC), 452-474 (QLVS…LGSL), 476-499 (KLKD…MYLQ), 500-523 (ALEN…SNCT), 524-547 (KLNW…GRLS), 548-570 (NLAI…LGNC), and 572-594 (SLIW…LFKQ). A glycan (N-linked (GlcNAc...) asparagine) is linked at Asn119. 2 N-linked (GlcNAc...) asparagine glycosylation sites follow: Asn166 and Asn196. Residues Asn235 and Asn245 are each glycosylated (N-linked (GlcNAc...) asparagine). N-linked (GlcNAc...) asparagine glycosylation occurs at Asn287. 2 N-linked (GlcNAc...) asparagine glycosylation sites follow: Asn339 and Asn363. Asn412 and Asn449 each carry an N-linked (GlcNAc...) asparagine glycan. N-linked (GlcNAc...) asparagine glycosylation occurs at Asn521. Asn556, Asn584, Asn646, and Asn662 each carry an N-linked (GlcNAc...) asparagine glycan. 4 LRR repeats span residues 664 to 686 (SMIF…LGAM), 688 to 711 (YLSI…GGLK), 712 to 735 (NVAI…TSLT), and 736 to 758 (LLGE…APFD). N-linked (GlcNAc...) asparagine glycans are attached at residues Asn724, Asn746, and Asn767. The short motif at 771–779 (CGYPLPLPC) is the Cys pair 2 element. Residues 803–823 (SVAMGLLFSLFCIFGLIIVAI) form a helical membrane-spanning segment. One can recognise a Protein kinase domain in the interval 888–1163 (FHNDSLVGSG…IQVMAMFKEI (276 aa)). ATP contacts are provided by residues 894–902 (VGSGGFGDV) and Lys916. Catalysis depends on Asp1014, which acts as the Proton acceptor.

This sequence belongs to the protein kinase superfamily. Ser/Thr protein kinase family. In terms of processing, glycosylated.

It localises to the cell membrane. The catalysed reaction is L-seryl-[protein] + ATP = O-phospho-L-seryl-[protein] + ADP + H(+). The enzyme catalyses L-threonyl-[protein] + ATP = O-phospho-L-threonyl-[protein] + ADP + H(+). Functionally, receptor with a serine/threonine-protein kinase activity. Involved in the perception of systemin, a peptide hormone responsible for the systemic activation of defense genes in leaves of wounded plants. May also regulate, in response to brassinosteroid binding, a signaling cascade involved in plant development. The protein is Systemin receptor SR160 of Solanum peruvianum (Peruvian tomato).